Reading from the N-terminus, the 688-residue chain is MSKIRVHEYAKKNNISSKDLMTKLKEMNIEVSNHMTMLEDEVVNKLDNEYNTGAEKPSVADEFEVEEKVVRSKKNSNKKKKKGKGNEDKRQDNFAGRQQTQIVETPDKITFSGSLTVGELAKKLSKEPSEIIKKLFMLGIMATINQDLDKDTIELIATDYGIEVEEEIVVSETEFETFMDEQDDEENLKERPAVVTIMGHVDHGKTTLLDSIRNSKVTAGEAGGITQHIGAYQVEVNDKKITFLDTPGHAAFTTMRARGAQVTDITILVVAADDGVMPQTVEAISHAKAAGVPIIVAVNKMDKPAANPDRVMQELTEYELVPEAWGGDTIFVPISAIQGEGIDNLLEMILLVSEVEEYKANPNRYATGTVIEAQLDKGKGTIATLLVQNGTLRVGDPIVVGTSFGRVRAMVSDIGRRVKVAGPSTPVEITGLNEVPQAGDRFMAFADEKKARQIGESRAQEALVAQRGEKSKLSLEDLFQQIQESDVKEINLIVKADVQGSVEAMAASLRKIDVEGVKVKIIHTGVGAITESDIILASASNAIVIGFNVRPDVNAKRTAELENVDVRLHRIIYKVIEEIELAMQGMLDPEFEEKVIGQAEVRQTFKVTKVGTIAGCYVIDGKITRDSGVRIIRDGIVIFEGQLDTLKRFKDDVKEVAQNYECGITIERYNDLKEGDIIEAYVMEEVKR.

The interval 62-103 (EFEVEEKVVRSKKNSNKKKKKGKGNEDKRQDNFAGRQQTQIV) is disordered. The span at 71 to 83 (RSKKNSNKKKKKG) shows a compositional bias: basic residues. The region spanning 190 to 359 (ERPAVVTIMG…LLVSEVEEYK (170 aa)) is the tr-type G domain. Residues 199-206 (GHVDHGKT) form a G1 region. 199-206 (GHVDHGKT) is a GTP binding site. The tract at residues 224 to 228 (GITQH) is G2. Residues 245 to 248 (DTPG) are G3. GTP is bound by residues 245-249 (DTPGH) and 299-302 (NKMD). The interval 299 to 302 (NKMD) is G4. The interval 335–337 (SAI) is G5.

The protein belongs to the TRAFAC class translation factor GTPase superfamily. Classic translation factor GTPase family. IF-2 subfamily.

The protein localises to the cytoplasm. Its function is as follows. One of the essential components for the initiation of protein synthesis. Protects formylmethionyl-tRNA from spontaneous hydrolysis and promotes its binding to the 30S ribosomal subunits. Also involved in the hydrolysis of GTP during the formation of the 70S ribosomal complex. The sequence is that of Translation initiation factor IF-2 from Bacillus cereus (strain G9842).